We begin with the raw amino-acid sequence, 355 residues long: 3-dehydroquinate synthase (355 aa).

NAD(+) is bound by residues 71–76 (EGEERK), 105–109 (GVVGD), 129–130 (TS), K142, and K151. Residues E184, H246, and H263 each coordinate Zn(2+).

Belongs to the sugar phosphate cyclases superfamily. Dehydroquinate synthase family. It depends on Co(2+) as a cofactor. The cofactor is Zn(2+). NAD(+) is required as a cofactor.

It is found in the cytoplasm. It carries out the reaction 7-phospho-2-dehydro-3-deoxy-D-arabino-heptonate = 3-dehydroquinate + phosphate. It participates in metabolic intermediate biosynthesis; chorismate biosynthesis; chorismate from D-erythrose 4-phosphate and phosphoenolpyruvate: step 2/7. In terms of biological role, catalyzes the conversion of 3-deoxy-D-arabino-heptulosonate 7-phosphate (DAHP) to dehydroquinate (DHQ). The protein is 3-dehydroquinate synthase of Streptococcus pneumoniae (strain JJA).